A 140-amino-acid polypeptide reads, in one-letter code: Large ribosomal subunit protein uL11 (140 aa).

It belongs to the universal ribosomal protein uL11 family. In terms of assembly, part of the ribosomal stalk of the 50S ribosomal subunit. Interacts with L10 and the large rRNA to form the base of the stalk. L10 forms an elongated spine to which L12 dimers bind in a sequential fashion forming a multimeric L10(L12)X complex. In terms of processing, one or more lysine residues are methylated.

Functionally, forms part of the ribosomal stalk which helps the ribosome interact with GTP-bound translation factors. The polypeptide is Large ribosomal subunit protein uL11 (Enterococcus faecalis (strain ATCC 700802 / V583)).